A 262-amino-acid polypeptide reads, in one-letter code: uncharacterized protein (262 aa).

A divalent metal cation contacts are provided by His-7, His-9, Glu-96, His-132, His-156, and Asp-211.

It belongs to the metallo-dependent hydrolases superfamily. TatD-type hydrolase family. A divalent metal cation serves as cofactor.

This is an uncharacterized protein from Mycoplasma genitalium (strain ATCC 33530 / DSM 19775 / NCTC 10195 / G37) (Mycoplasmoides genitalium).